Reading from the N-terminus, the 201-residue chain is 3-isopropylmalate dehydratase small subunit (201 aa).

Belongs to the LeuD family. LeuD type 1 subfamily. In terms of assembly, heterodimer of LeuC and LeuD.

It carries out the reaction (2R,3S)-3-isopropylmalate = (2S)-2-isopropylmalate. It functions in the pathway amino-acid biosynthesis; L-leucine biosynthesis; L-leucine from 3-methyl-2-oxobutanoate: step 2/4. Functionally, catalyzes the isomerization between 2-isopropylmalate and 3-isopropylmalate, via the formation of 2-isopropylmaleate. In Salmonella schwarzengrund (strain CVM19633), this protein is 3-isopropylmalate dehydratase small subunit.